Consider the following 292-residue polypeptide: Glycine--tRNA ligase alpha subunit (292 aa).

This sequence belongs to the class-II aminoacyl-tRNA synthetase family. As to quaternary structure, tetramer of two alpha and two beta subunits.

The protein localises to the cytoplasm. The enzyme catalyses tRNA(Gly) + glycine + ATP = glycyl-tRNA(Gly) + AMP + diphosphate. The chain is Glycine--tRNA ligase alpha subunit from Buchnera aphidicola subsp. Schizaphis graminum (strain Sg).